The chain runs to 329 residues: 4-hydroxythreonine-4-phosphate dehydrogenase (329 aa).

Substrate-binding residues include histidine 136 and threonine 137. Residues histidine 166, histidine 211, and histidine 266 each contribute to the a divalent metal cation site. The substrate site is built by lysine 274, asparagine 283, and arginine 292.

Belongs to the PdxA family. In terms of assembly, homodimer. The cofactor is Zn(2+). Requires Mg(2+) as cofactor. Co(2+) is required as a cofactor.

The protein resides in the cytoplasm. It catalyses the reaction 4-(phosphooxy)-L-threonine + NAD(+) = 3-amino-2-oxopropyl phosphate + CO2 + NADH. It participates in cofactor biosynthesis; pyridoxine 5'-phosphate biosynthesis; pyridoxine 5'-phosphate from D-erythrose 4-phosphate: step 4/5. Functionally, catalyzes the NAD(P)-dependent oxidation of 4-(phosphooxy)-L-threonine (HTP) into 2-amino-3-oxo-4-(phosphooxy)butyric acid which spontaneously decarboxylates to form 3-amino-2-oxopropyl phosphate (AHAP). The polypeptide is 4-hydroxythreonine-4-phosphate dehydrogenase (Pseudomonas syringae pv. tomato (strain ATCC BAA-871 / DC3000)).